We begin with the raw amino-acid sequence, 208 residues long: N-(5'-phosphoribosyl)anthranilate isomerase (208 aa).

This sequence belongs to the TrpF family.

The enzyme catalyses N-(5-phospho-beta-D-ribosyl)anthranilate = 1-(2-carboxyphenylamino)-1-deoxy-D-ribulose 5-phosphate. It functions in the pathway amino-acid biosynthesis; L-tryptophan biosynthesis; L-tryptophan from chorismate: step 3/5. The chain is N-(5'-phosphoribosyl)anthranilate isomerase from Neisseria gonorrhoeae (strain NCCP11945).